The sequence spans 156 residues: ATP synthase subunit b (156 aa).

A helical membrane pass occupies residues 5–27 (ITLIGQMITFAIFIGFTMKFVWP).

This sequence belongs to the ATPase B chain family. As to quaternary structure, F-type ATPases have 2 components, F(1) - the catalytic core - and F(0) - the membrane proton channel. F(1) has five subunits: alpha(3), beta(3), gamma(1), delta(1), epsilon(1). F(0) has three main subunits: a(1), b(2) and c(10-14). The alpha and beta chains form an alternating ring which encloses part of the gamma chain. F(1) is attached to F(0) by a central stalk formed by the gamma and epsilon chains, while a peripheral stalk is formed by the delta and b chains.

The protein localises to the cell inner membrane. Functionally, f(1)F(0) ATP synthase produces ATP from ADP in the presence of a proton or sodium gradient. F-type ATPases consist of two structural domains, F(1) containing the extramembraneous catalytic core and F(0) containing the membrane proton channel, linked together by a central stalk and a peripheral stalk. During catalysis, ATP synthesis in the catalytic domain of F(1) is coupled via a rotary mechanism of the central stalk subunits to proton translocation. Component of the F(0) channel, it forms part of the peripheral stalk, linking F(1) to F(0). The polypeptide is ATP synthase subunit b (Francisella tularensis subsp. holarctica (strain OSU18)).